The sequence spans 141 residues: VLSSTDKSNVKAAWDKVGGHVGEYGAEALERMFLSFPTTKTYFPHFDLAHGSSQVKAHGKKVGDALTNAVGHIDDLPGALSALSDLHAYKLRVDPVNFKLLSHCLLVTLASHLPSDFTPAVHASLDKFLASVSTVLTSKYR.

The region spanning 1–141 (VLSSTDKSNV…VSTVLTSKYR (141 aa)) is the Globin domain. The residue at position 3 (Ser-3) is a Phosphoserine. N6-succinyllysine occurs at positions 7 and 11. At Lys-16 the chain carries N6-acetyllysine; alternate. Lys-16 carries the post-translational modification N6-succinyllysine; alternate. Phosphotyrosine is present on Tyr-24. At Ser-35 the chain carries Phosphoserine. Lys-40 carries the N6-succinyllysine modification. Position 58 (His-58) interacts with O2. Residue His-87 participates in heme b binding. A Phosphoserine modification is found at Ser-102. Phosphothreonine is present on Thr-108. 2 positions are modified to phosphoserine: Ser-124 and Ser-131. Phosphothreonine is present on residues Thr-134 and Thr-137. Ser-138 is modified (phosphoserine).

The protein belongs to the globin family. In terms of assembly, heterotetramer of two alpha chains and two beta chains. Red blood cells.

In terms of biological role, involved in oxygen transport from the lung to the various peripheral tissues. Hemopressin acts as an antagonist peptide of the cannabinoid receptor CNR1. Hemopressin-binding efficiently blocks cannabinoid receptor CNR1 and subsequent signaling. The sequence is that of Hemoglobin subunit alpha (HBA) from Pteropus alecto (Black flying fox).